The following is a 245-amino-acid chain: Homeobox protein goosecoid (245 aa).

The homeobox DNA-binding region spans 150 to 209 (KRRHRTIFTDEQLEALENLFQETKYPDVGTREQLARKVHLREEKVEVWFKNRRAKWRRQK). The segment at 203 to 245 (AKWRRQKRSSSEESENAQKWNKASKTSPEKRQEDGKSDLDSDS) is disordered. Over residues 219-228 (AQKWNKASKT) the composition is skewed to polar residues. Residues 229 to 245 (SPEKRQEDGKSDLDSDS) are compositionally biased toward basic and acidic residues.

Belongs to the paired homeobox family. Bicoid subfamily.

The protein localises to the nucleus. Functionally, involved in the development of the organizer region in the gastrula (Hensen node in chicken). The protein is Homeobox protein goosecoid (GSC) of Gallus gallus (Chicken).